Here is a 406-residue protein sequence, read N- to C-terminus: Cysteine desulfurase (406 aa).

Lys-226 carries the post-translational modification N6-(pyridoxal phosphate)lysine. The Cysteine persulfide intermediate role is filled by Cys-364.

This sequence belongs to the class-V pyridoxal-phosphate-dependent aminotransferase family. Csd subfamily. As to quaternary structure, homodimer. Interacts with SufE and the SufBCD complex composed of SufB, SufC and SufD. The interaction with SufE is required to mediate the direct transfer of the sulfur atom from the S-sulfanylcysteine. Pyridoxal 5'-phosphate serves as cofactor.

It localises to the cytoplasm. The enzyme catalyses (sulfur carrier)-H + L-cysteine = (sulfur carrier)-SH + L-alanine. It carries out the reaction L-selenocysteine + AH2 = hydrogenselenide + L-alanine + A + H(+). It functions in the pathway cofactor biosynthesis; iron-sulfur cluster biosynthesis. In terms of biological role, cysteine desulfurases mobilize the sulfur from L-cysteine to yield L-alanine, an essential step in sulfur metabolism for biosynthesis of a variety of sulfur-containing biomolecules. Component of the suf operon, which is activated and required under specific conditions such as oxidative stress and iron limitation. Acts as a potent selenocysteine lyase in vitro, that mobilizes selenium from L-selenocysteine. Selenocysteine lyase activity is however unsure in vivo. This chain is Cysteine desulfurase, found in Yersinia pseudotuberculosis serotype IB (strain PB1/+).